The sequence spans 88 residues: MVKLRLQRTGTKHDPHYRIVAADSRSPRDGKFVDIVGHYHPAQIKEQTTFNKEKILTWLKNGAQPTGTVLNLFKNAGIWAEYKTTLKK.

The protein belongs to the bacterial ribosomal protein bS16 family.

This Leptospira interrogans serogroup Icterohaemorrhagiae serovar Lai (strain 56601) protein is Small ribosomal subunit protein bS16.